A 334-amino-acid chain; its full sequence is Holliday junction branch migration complex subunit RuvB (334 aa).

The interval 4 to 186 (ADRLIAPENP…FGITQRLEYY (183 aa)) is large ATPase domain (RuvB-L). ATP-binding positions include Ile25, Arg26, Gly67, Lys70, Thr71, Thr72, 133–135 (EDY), Arg176, Tyr186, and Arg223. Mg(2+) is bound at residue Thr71. Positions 187–257 (KVKDLQDIVQ…TADKALNMLD (71 aa)) are small ATPAse domain (RuvB-S). Residues 260–334 (AEGFDYMDRK…RAYLHFGIEK (75 aa)) are head domain (RuvB-H). Arg315 and Arg320 together coordinate DNA.

The protein belongs to the RuvB family. Homohexamer. Forms an RuvA(8)-RuvB(12)-Holliday junction (HJ) complex. HJ DNA is sandwiched between 2 RuvA tetramers; dsDNA enters through RuvA and exits via RuvB. An RuvB hexamer assembles on each DNA strand where it exits the tetramer. Each RuvB hexamer is contacted by two RuvA subunits (via domain III) on 2 adjacent RuvB subunits; this complex drives branch migration. In the full resolvosome a probable DNA-RuvA(4)-RuvB(12)-RuvC(2) complex forms which resolves the HJ.

The protein resides in the cytoplasm. The catalysed reaction is ATP + H2O = ADP + phosphate + H(+). Functionally, the RuvA-RuvB-RuvC complex processes Holliday junction (HJ) DNA during genetic recombination and DNA repair, while the RuvA-RuvB complex plays an important role in the rescue of blocked DNA replication forks via replication fork reversal (RFR). RuvA specifically binds to HJ cruciform DNA, conferring on it an open structure. The RuvB hexamer acts as an ATP-dependent pump, pulling dsDNA into and through the RuvAB complex. RuvB forms 2 homohexamers on either side of HJ DNA bound by 1 or 2 RuvA tetramers; 4 subunits per hexamer contact DNA at a time. Coordinated motions by a converter formed by DNA-disengaged RuvB subunits stimulates ATP hydrolysis and nucleotide exchange. Immobilization of the converter enables RuvB to convert the ATP-contained energy into a lever motion, pulling 2 nucleotides of DNA out of the RuvA tetramer per ATP hydrolyzed, thus driving DNA branch migration. The RuvB motors rotate together with the DNA substrate, which together with the progressing nucleotide cycle form the mechanistic basis for DNA recombination by continuous HJ branch migration. Branch migration allows RuvC to scan DNA until it finds its consensus sequence, where it cleaves and resolves cruciform DNA. This chain is Holliday junction branch migration complex subunit RuvB, found in Vibrio campbellii (strain ATCC BAA-1116).